The primary structure comprises 425 residues: UPF0597 protein VIBHAR_03081 (425 aa).

This sequence belongs to the UPF0597 family.

The polypeptide is UPF0597 protein VIBHAR_03081 (Vibrio campbellii (strain ATCC BAA-1116)).